The primary structure comprises 357 residues: Glucose-6-phosphatase catalytic subunit 1 (357 aa).

The Lumenal segment spans residues 1–28; that stretch reads MEKGMNVLHDFGIQSTHYLQVNYQDSQD. A helical membrane pass occupies residues 29-49; sequence WFILVSVIADLRNAFYVLFPI. At 50 to 60 the chain is on the cytoplasmic side; the sequence is WFHLREAVGIK. Residues 61–81 form a helical membrane-spanning segment; that stretch reads LLWVAVIGDWLNLVFKWILFG. At 82–117 the chain is on the lumenal side; that stretch reads QRPYWWVMDTDYYSNASVPLIKQFPVTCETGPGSPS. Substrate is bound at residue Arg-83. Asn-96 is a glycosylation site (N-linked (GlcNAc...) asparagine). Residues 118–138 traverse the membrane as a helical segment; sequence GHAMGTAGVYYVMVTSTLSMF. The active-site Proton donor is His-119. The Cytoplasmic portion of the chain corresponds to 139-147; sequence RGKKKPTYR. A helical transmembrane segment spans residues 148 to 168; it reads FRCLNVILWLGFWAVQLNVCL. At 169–170 the chain is on the lumenal side; it reads SR. Arg-170 is a substrate binding site. A helical membrane pass occupies residues 171-191; sequence IYLAAHFPHQVVAGVLSGIAV. The active-site Nucleophile is the His-176. At 192 to 209 the chain is on the cytoplasmic side; it reads AETFRHIQSIYNASLKKY. Residues 210-230 form a helical membrane-spanning segment; sequence FFITFFLLSFAIGFYLLLKGL. Residues 231–254 lie on the Lumenal side of the membrane; sequence GVDLLWTLEKARRWCERPEWVHID. The chain crosses the membrane as a helical span at residues 255–275; that stretch reads TTPFASLLKNVGTLFGLGLAL. Residues 276–291 lie on the Cytoplasmic side of the membrane; that stretch reads NSSMYRESCKGTLSKW. The chain crosses the membrane as a helical span at residues 292–312; it reads FPFRLSCIVVSLILLHLFDSL. Residues 313-320 are Lumenal-facing; that stretch reads KPPSQIEL. Residues 321–341 form a helical membrane-spanning segment; the sequence is IFYVLSFCKSAAVPLASVSLI. Residues 342–357 lie on the Cytoplasmic side of the membrane; sequence PYCLARVLGQPDKKSL. The Prevents secretion from ER signature appears at 354-357; the sequence is KKSL.

It belongs to the glucose-6-phosphatase family.

Its subcellular location is the endoplasmic reticulum membrane. The catalysed reaction is D-glucose 6-phosphate + H2O = D-glucose + phosphate. The protein operates within carbohydrate biosynthesis; gluconeogenesis. In terms of biological role, hydrolyzes glucose-6-phosphate to glucose in the endoplasmic reticulum. Forms with the glucose-6-phosphate transporter (SLC37A4/G6PT) the complex responsible for glucose production in the terminal step of glycogenolysis and gluconeogenesis. Hence, it is the key enzyme in homeostatic regulation of blood glucose levels. The sequence is that of Glucose-6-phosphatase catalytic subunit 1 (G6PC1) from Felis catus (Cat).